A 400-amino-acid chain; its full sequence is Argininosuccinate synthase (400 aa).

ATP-binding positions include 10 to 18 and Ala-38; that span reads AYSGGVDTS. An L-citrulline-binding site is contributed by Tyr-89. Gly-119 serves as a coordination point for ATP. L-aspartate-binding residues include Thr-121, Asn-125, and Asp-126. Asn-125 lines the L-citrulline pocket. 5 residues coordinate L-citrulline: Arg-129, Ser-177, Ser-186, Glu-262, and Tyr-274.

This sequence belongs to the argininosuccinate synthase family. Type 1 subfamily. As to quaternary structure, homotetramer.

It localises to the cytoplasm. The catalysed reaction is L-citrulline + L-aspartate + ATP = 2-(N(omega)-L-arginino)succinate + AMP + diphosphate + H(+). It functions in the pathway amino-acid biosynthesis; L-arginine biosynthesis; L-arginine from L-ornithine and carbamoyl phosphate: step 2/3. This Prochlorococcus marinus (strain NATL1A) protein is Argininosuccinate synthase.